The sequence spans 88 residues: MEDTVKITAEELKGYIERIEKLEQEKRDVQDHIRDVYAKATDEGWDIKVMKQIIRLRKMDDDDREEQEILLDTYKRALGMSYEEELSE.

It belongs to the UPF0335 family.

This chain is UPF0335 protein WRi_003770, found in Wolbachia sp. subsp. Drosophila simulans (strain wRi).